Reading from the N-terminus, the 65-residue chain is Large ribosomal subunit protein bL35 (65 aa).

This sequence belongs to the bacterial ribosomal protein bL35 family.

The protein is Large ribosomal subunit protein bL35 of Baumannia cicadellinicola subsp. Homalodisca coagulata.